A 431-amino-acid polypeptide reads, in one-letter code: MDALQLVSNRSETDVPALMHALGQQARASAHALSLASTEAKNLALRVAAEQLRKRTQDLLLANARDLEGAKAQDANAAFLDRLTLDDKRIEAIARGLDEIAALPDPVGRMLARYERPNGLVIERVATPLGVIGIIYESRPAVTADAGALCLKAGNAAILRGGSESFFSATIIHACLTEGLRAAGLPEAAVSLVPTRDRAAVGEMLKGLDGTIDVIVPRGGKSLVARVQAEARVPVFAHLEGVNHIFVHRAADLEKAAIIIRNAKLRRPGVCGAAEILLVDEACMATHLAPLTRMLLDAGCAIRGDAATQTIDPRVTAAMESDWRTEYSDAIIAVRVIDGLNKAIAHIETHGSHHTDCIITEDQEAADRFLAEVDSAIVMHNASTQFADGGEFGFGAEIGIATGRLHARGPVGLEQLTSFKYRVHGNGQIRP.

This sequence belongs to the gamma-glutamyl phosphate reductase family.

It localises to the cytoplasm. The catalysed reaction is L-glutamate 5-semialdehyde + phosphate + NADP(+) = L-glutamyl 5-phosphate + NADPH + H(+). It functions in the pathway amino-acid biosynthesis; L-proline biosynthesis; L-glutamate 5-semialdehyde from L-glutamate: step 2/2. Functionally, catalyzes the NADPH-dependent reduction of L-glutamate 5-phosphate into L-glutamate 5-semialdehyde and phosphate. The product spontaneously undergoes cyclization to form 1-pyrroline-5-carboxylate. The chain is Gamma-glutamyl phosphate reductase from Beijerinckia indica subsp. indica (strain ATCC 9039 / DSM 1715 / NCIMB 8712).